The primary structure comprises 777 residues: UPF0313 protein VP1980 (777 aa).

Residues 363–642 (AYDMIKTSVN…KALLRYHDPA (280 aa)) form the Radical SAM core domain. [4Fe-4S] cluster-binding residues include Cys-377, Cys-381, and Cys-384. The tract at residues 675–777 (AQTPAQRRKS…PAGQRKPKRR (103 aa)) is disordered. The segment covering 680-698 (QRRKSGRHGANRFATKHTK) has biased composition (basic residues). The span at 709 to 719 (KRAEGGSKDGK) shows a compositional bias: basic and acidic residues. Positions 736–747 (PASNGQRPSGNG) are enriched in polar residues. Over residues 755 to 769 (KPQGQGRPQGQGKPA) the composition is skewed to low complexity.

Belongs to the UPF0313 family. [4Fe-4S] cluster is required as a cofactor.

The chain is UPF0313 protein VP1980 from Vibrio parahaemolyticus serotype O3:K6 (strain RIMD 2210633).